We begin with the raw amino-acid sequence, 54 residues long: Large ribosomal subunit protein bL33A (54 aa).

Belongs to the bacterial ribosomal protein bL33 family.

This chain is Large ribosomal subunit protein bL33A (rpmG1), found in Mycobacterium bovis (strain ATCC BAA-935 / AF2122/97).